Here is a 524-residue protein sequence, read N- to C-terminus: Rho guanine nucleotide exchange factor 3 (524 aa).

The tract at residues 75-98 (SDSRPDLFSPRPWSRNTPAANTKR) is disordered. Residues 121–303 (IKRQEAIFEL…IQGIVAEINI (183 aa)) form the DH domain. One can recognise a PH domain in the interval 290–448 (AINIIQGIVA…QWLNCIRQAK (159 aa)).

The protein resides in the cytoplasm. Its function is as follows. Acts as a guanine nucleotide exchange factor (GEF) for RhoA and RhoB GTPases. The protein is Rho guanine nucleotide exchange factor 3 (Arhgef3) of Gallus gallus (Chicken).